A 438-amino-acid polypeptide reads, in one-letter code: UDP-N-acetylmuramoylalanine--D-glutamate ligase (438 aa).

112 to 118 (GSNGKST) provides a ligand contact to ATP.

This sequence belongs to the MurCDEF family.

It is found in the cytoplasm. It catalyses the reaction UDP-N-acetyl-alpha-D-muramoyl-L-alanine + D-glutamate + ATP = UDP-N-acetyl-alpha-D-muramoyl-L-alanyl-D-glutamate + ADP + phosphate + H(+). It participates in cell wall biogenesis; peptidoglycan biosynthesis. Cell wall formation. Catalyzes the addition of glutamate to the nucleotide precursor UDP-N-acetylmuramoyl-L-alanine (UMA). This chain is UDP-N-acetylmuramoylalanine--D-glutamate ligase, found in Yersinia pseudotuberculosis serotype I (strain IP32953).